Consider the following 569-residue polypeptide: Mitogen-activated protein kinase 7 (569 aa).

In terms of domain architecture, Protein kinase spans 13 to 304; that stretch reads YKIQEIVGKG…AEEALADPYF (292 aa). Residues 19 to 27 and lysine 42 each bind ATP; that span reads VGKGSYGVV. The Proton acceptor role is filled by aspartate 139. A Phosphothreonine modification is found at threonine 175. Residues 175–177 carry the TXY motif; that stretch reads TDY. Phosphotyrosine is present on tyrosine 177. The segment at 401 to 420 is disordered; sequence TTVHSTSIPPNEGLDATSQV.

This sequence belongs to the protein kinase superfamily. CMGC Ser/Thr protein kinase family. MAP kinase subfamily. Dually phosphorylated on Thr-175 and Tyr-177, which activates the enzyme.

It catalyses the reaction L-seryl-[protein] + ATP = O-phospho-L-seryl-[protein] + ADP + H(+). The catalysed reaction is L-threonyl-[protein] + ATP = O-phospho-L-threonyl-[protein] + ADP + H(+). Activated by threonine and tyrosine phosphorylation. This Oryza sativa subsp. japonica (Rice) protein is Mitogen-activated protein kinase 7 (MPK7).